Reading from the N-terminus, the 149-residue chain is Transcriptional repressor NrdR (149 aa).

Residues 3–34 (CPFCNADDTKVIDSRLVADGHQVRRRRECLVC) fold into a zinc finger. The region spanning 49–139 (PRVIKSNGVR…VYRSFEDIRE (91 aa)) is the ATP-cone domain.

It belongs to the NrdR family. Zn(2+) is required as a cofactor.

Functionally, negatively regulates transcription of bacterial ribonucleotide reductase nrd genes and operons by binding to NrdR-boxes. This Tolumonas auensis (strain DSM 9187 / NBRC 110442 / TA 4) protein is Transcriptional repressor NrdR.